The following is a 145-amino-acid chain: Basic phospholipase A2 cPm05 (145 aa).

The N-terminal stretch at 1–21 (MYPAHLLVLLAVCISLLGASA) is a signal peptide. Residues 22 to 27 (IPPLPL) constitute a propeptide that is removed on maturation. 7 disulfide bridges follow: Cys-38-Cys-98, Cys-54-Cys-144, Cys-56-Cys-72, Cys-71-Cys-125, Cys-78-Cys-118, Cys-87-Cys-111, and Cys-105-Cys-116. Ca(2+)-binding residues include Tyr-55, Gly-57, and Gly-59. His-75 is a catalytic residue. Ca(2+) is bound at residue Asp-76. Asp-119 is an active-site residue.

It belongs to the phospholipase A2 family. Group I subfamily. D49 sub-subfamily. It depends on Ca(2+) as a cofactor. Expressed by the venom gland.

It is found in the secreted. The enzyme catalyses a 1,2-diacyl-sn-glycero-3-phosphocholine + H2O = a 1-acyl-sn-glycero-3-phosphocholine + a fatty acid + H(+). Functionally, PLA2 catalyzes the calcium-dependent hydrolysis of the 2-acyl groups in 3-sn-phosphoglycerides. In Laticauda semifasciata (Black-banded sea krait), this protein is Basic phospholipase A2 cPm05.